Here is a 442-residue protein sequence, read N- to C-terminus: Protein IQ-DOMAIN 33 (442 aa).

The region spanning 159 to 188 (EEDAAVIIQSAFRSYLAIRRSKEEEETFAK) is the IQ domain. Positions 184-212 (ETFAKEESFSGEESQDNASMGTSLEAQTG) are disordered. A compositionally biased stretch (polar residues) spans 199 to 212 (DNASMGTSLEAQTG). A calmodulin-binding region spans residues 270-282 (RERALAYAFSQQL). The interval 375-442 (EKSSFKPSIS…ETSHKLNSST (68 aa)) is disordered. Positions 383 to 402 (ISKRKSVPSYKSQRKHHKLQ) are enriched in basic residues. The Nuclear localization signal signature appears at 385-392 (KRKSVPSY).

The protein belongs to the IQD family. As to quaternary structure, binds to multiple calmodulin (CaM) in the presence of Ca(2+) and CaM-like proteins.

Its subcellular location is the nucleus. May be involved in cooperative interactions with calmodulins or calmodulin-like proteins. Recruits calmodulin proteins to microtubules, thus being a potential scaffold in cellular signaling and trafficking. May associate with nucleic acids and regulate gene expression at the transcriptional or post-transcriptional level. This is Protein IQ-DOMAIN 33 from Arabidopsis thaliana (Mouse-ear cress).